Reading from the N-terminus, the 887-residue chain is MNSTSTATPIANENHTPMMQQYLRIKAEHPNEIVFYRMGDFYELFFDDAKKAAKLLDVTLTARGKSNGEPIPMAGVPYHAAENYLAKLVRLGVSVAIVEQVGDPATTKGPVERKVMRIVTPGTVSDEALLDETRDNLLVAITLKDERYGISSLDMGSGRFTVFEVADEEALIGEIERLQPAELLAPELLTVPNIISLRAGYRRRPDWEFEYDTAQRLLTRHFGTQDLSGFGCEDFTAGISAAGCLFAYAQETQKTTLSHVAKLVLDNPETKVTLDAATRRNLELDTNLAGTEDNTLFSVLNTTTTAMGGRLLRRWLHSPLRDIYILNQRQSAIEALLDNYQFEPLRHTLKHISDLERILGRLALRSARPRDLSRLCASIAEFPAIQQHLNGIDSPLLKKLAKEIREFPDLVDLLSRALMENPPVVIREGGVIAEGFDEELDELRAISTNAGDYLIKLEEQERAKTGLSTLKVGYNRVHGYYIEISKSQASSAPTEYIRRQTLKNAERFITPELKTFEDKALSAKSRALAREKGLYDDLIETLNEQLRELQVAASGVAELDVLTTLAERSNLLNFCKPELYEGEGIFIEQGRHPVVEQVLDDPFVPNDLLLDTDQRMLIITGPNMGGKSTYMRQTALIVLLAQIGCYVPASACKLGLVDRIFTRIGSSDDLAGGRSTFMVEMTETANILNNATRNSLVLMDEIGRGTSTYDGLSLAWACVEHLANNLHAFTLFATHYFELTGLPKALAGVQNVHLDATEHNDSIVFLHKIQPGPASKSFGLQVAKLAGIPSNVIADAGGHLRRLEAQPTVDTPHQFPAPEPIALQEPVAEPEPNKPAAAAKTKPASPQPDLFASAAPSAVEIKLRSINPDNLTPRQALQALYDLKDIS.

621-628 contributes to the ATP binding site; the sequence is GPNMGGKS. The interval 828–853 is disordered; that stretch reads AEPEPNKPAAAAKTKPASPQPDLFAS. Residues 834–848 show a composition bias toward low complexity; the sequence is KPAAAAKTKPASPQP.

The protein belongs to the DNA mismatch repair MutS family.

This protein is involved in the repair of mismatches in DNA. It is possible that it carries out the mismatch recognition step. This protein has a weak ATPase activity. The protein is DNA mismatch repair protein MutS of Saccharophagus degradans (strain 2-40 / ATCC 43961 / DSM 17024).